Reading from the N-terminus, the 433-residue chain is 28S rRNA (cytosine-C(5))-methyltransferase (433 aa).

S-adenosyl-L-methionine-binding positions include 235–241 (CAAPGMK), Glu259, Asp286, and Asp304. Catalysis depends on Cys357, which acts as the Nucleophile.

Belongs to the class I-like SAM-binding methyltransferase superfamily. RsmB/NOP family.

It carries out the reaction a cytidine in 28S rRNA + S-adenosyl-L-methionine = a 5-methylcytidine in 28S rRNA + S-adenosyl-L-homocysteine + H(+). In terms of biological role, S-adenosyl-L-methionine-dependent methyltransferase that specifically methylates the C(5) position of a cytosine in 28S rRNA. The polypeptide is 28S rRNA (cytosine-C(5))-methyltransferase (Drosophila melanogaster (Fruit fly)).